The chain runs to 212 residues: Pyridoxine/pyridoxamine 5'-phosphate oxidase (212 aa).

Residues 61 to 66, 76 to 77, Lys82, Lys83, and Gln105 contribute to the FMN site; these read RTVLLK and FT. Lys66 contacts substrate. Substrate contacts are provided by Tyr123, Arg127, and Ser131. Residues 140 to 141 and Trp185 contribute to the FMN site; that span reads QS. 191 to 193 provides a ligand contact to substrate; it reads RLH. Position 195 (Arg195) interacts with FMN.

Belongs to the pyridoxamine 5'-phosphate oxidase family. Homodimer. It depends on FMN as a cofactor.

It carries out the reaction pyridoxamine 5'-phosphate + O2 + H2O = pyridoxal 5'-phosphate + H2O2 + NH4(+). The enzyme catalyses pyridoxine 5'-phosphate + O2 = pyridoxal 5'-phosphate + H2O2. Its pathway is cofactor metabolism; pyridoxal 5'-phosphate salvage; pyridoxal 5'-phosphate from pyridoxamine 5'-phosphate: step 1/1. It functions in the pathway cofactor metabolism; pyridoxal 5'-phosphate salvage; pyridoxal 5'-phosphate from pyridoxine 5'-phosphate: step 1/1. Functionally, catalyzes the oxidation of either pyridoxine 5'-phosphate (PNP) or pyridoxamine 5'-phosphate (PMP) into pyridoxal 5'-phosphate (PLP). The protein is Pyridoxine/pyridoxamine 5'-phosphate oxidase of Vesicomyosocius okutanii subsp. Calyptogena okutanii (strain HA).